A 75-amino-acid chain; its full sequence is MLEKAKIDRINELSKKKKAGTLTATEKVEQDKLRKEYIKSFRTHMKGTIENTTIIDPNGTDVTPHKVKQLRKNKH.

The interval 56–75 (DPNGTDVTPHKVKQLRKNKH) is disordered. Basic residues predominate over residues 65–75 (HKVKQLRKNKH).

Belongs to the UPF0291 family.

Its subcellular location is the cytoplasm. The sequence is that of UPF0291 protein LMOf2365_1322 from Listeria monocytogenes serotype 4b (strain F2365).